Consider the following 114-residue polypeptide: Large ribosomal subunit protein eL31 (114 aa).

This sequence belongs to the eukaryotic ribosomal protein eL31 family.

This chain is Large ribosomal subunit protein eL31 (RPL31), found in Eremothecium gossypii (strain ATCC 10895 / CBS 109.51 / FGSC 9923 / NRRL Y-1056) (Yeast).